Reading from the N-terminus, the 205-residue chain is Large ribosomal subunit protein uL4 (205 aa).

The span at 43–60 (ARSGNRAQQTRAEVSAST) shows a compositional bias: polar residues. A disordered region spans residues 43 to 96 (ARSGNRAQQTRAEVSASTHKPWRQKGTGRARSGRASSPIWRGGGVTFPNKPNEN). Residues 62 to 74 (KPWRQKGTGRARS) show a composition bias toward basic residues.

This sequence belongs to the universal ribosomal protein uL4 family. Part of the 50S ribosomal subunit.

Functionally, one of the primary rRNA binding proteins, this protein initially binds near the 5'-end of the 23S rRNA. It is important during the early stages of 50S assembly. It makes multiple contacts with different domains of the 23S rRNA in the assembled 50S subunit and ribosome. In terms of biological role, forms part of the polypeptide exit tunnel. The protein is Large ribosomal subunit protein uL4 of Thiobacillus denitrificans (strain ATCC 25259 / T1).